The primary structure comprises 413 residues: Multifunctional CCA protein (413 aa).

The ATP site is built by glycine 8 and arginine 11. CTP-binding residues include glycine 8 and arginine 11. The Mg(2+) site is built by aspartate 21 and aspartate 23. Residues arginine 91, arginine 137, and arginine 140 each coordinate ATP. Residues arginine 91, arginine 137, and arginine 140 each contribute to the CTP site. Positions 228–329 (TGIHTLMVLE…VKIFDKADLW (102 aa)) constitute an HD domain.

Belongs to the tRNA nucleotidyltransferase/poly(A) polymerase family. Bacterial CCA-adding enzyme type 1 subfamily. As to quaternary structure, monomer. Can also form homodimers and oligomers. Mg(2+) is required as a cofactor. Ni(2+) serves as cofactor.

It carries out the reaction a tRNA precursor + 2 CTP + ATP = a tRNA with a 3' CCA end + 3 diphosphate. The catalysed reaction is a tRNA with a 3' CCA end + 2 CTP + ATP = a tRNA with a 3' CCACCA end + 3 diphosphate. In terms of biological role, catalyzes the addition and repair of the essential 3'-terminal CCA sequence in tRNAs without using a nucleic acid template. Adds these three nucleotides in the order of C, C, and A to the tRNA nucleotide-73, using CTP and ATP as substrates and producing inorganic pyrophosphate. tRNA 3'-terminal CCA addition is required both for tRNA processing and repair. Also involved in tRNA surveillance by mediating tandem CCA addition to generate a CCACCA at the 3' terminus of unstable tRNAs. While stable tRNAs receive only 3'-terminal CCA, unstable tRNAs are marked with CCACCA and rapidly degraded. The sequence is that of Multifunctional CCA protein from Shewanella sediminis (strain HAW-EB3).